Reading from the N-terminus, the 321-residue chain is Phosphate metabolism protein 8 (321 aa).

This sequence belongs to the SSM1 family.

In terms of biological role, may be involved in phosphate metabolism. The chain is Phosphate metabolism protein 8 (PHM8) from Saccharomyces cerevisiae (strain ATCC 204508 / S288c) (Baker's yeast).